The chain runs to 173 residues: Translation initiation factor IF-3 (173 aa).

Belongs to the IF-3 family. In terms of assembly, monomer.

Its subcellular location is the cytoplasm. IF-3 binds to the 30S ribosomal subunit and shifts the equilibrium between 70S ribosomes and their 50S and 30S subunits in favor of the free subunits, thus enhancing the availability of 30S subunits on which protein synthesis initiation begins. The chain is Translation initiation factor IF-3 from Campylobacter lari (strain RM2100 / D67 / ATCC BAA-1060).